Here is a 258-residue protein sequence, read N- to C-terminus: Phosphate import ATP-binding protein PstB (258 aa).

Residues 5–247 (IDVSGLTAYY…SQIFSNPKEK (243 aa)) enclose the ABC transporter domain. 37-44 (GPSGCGKS) contacts ATP.

Belongs to the ABC transporter superfamily. Phosphate importer (TC 3.A.1.7) family. As to quaternary structure, the complex is composed of two ATP-binding proteins (PstB), two transmembrane proteins (PstC and PstA) and a solute-binding protein (PstS).

The protein resides in the cell membrane. The catalysed reaction is phosphate(out) + ATP + H2O = ADP + 2 phosphate(in) + H(+). Part of the ABC transporter complex PstSACB involved in phosphate import. Responsible for energy coupling to the transport system. The sequence is that of Phosphate import ATP-binding protein PstB from Frankia casuarinae (strain DSM 45818 / CECT 9043 / HFP020203 / CcI3).